A 644-amino-acid polypeptide reads, in one-letter code: Exoribonuclease 2 (644 aa).

The 328-residue stretch at 189–516 (REDLTALDFV…NHRLLKAVIK (328 aa)) folds into the RNB domain. The 83-residue stretch at 561 to 643 (DTRFAAEIVD…ETRSIIARPV (83 aa)) folds into the S1 motif domain.

The protein belongs to the RNR ribonuclease family. RNase II subfamily.

The protein resides in the cytoplasm. The enzyme catalyses Exonucleolytic cleavage in the 3'- to 5'-direction to yield nucleoside 5'-phosphates.. Involved in mRNA degradation. Hydrolyzes single-stranded polyribonucleotides processively in the 3' to 5' direction. The polypeptide is Exoribonuclease 2 (Shigella boydii serotype 18 (strain CDC 3083-94 / BS512)).